Consider the following 106-residue polypeptide: Insulin-2 (106 aa).

The first 23 residues, M1–A23, serve as a signal peptide directing secretion. 3 disulfide bridges follow: C30-C92, C42-C105, and C91-C96. The propeptide at D56 to M83 is c peptide.

The protein belongs to the insulin family. In terms of assembly, heterodimer of a B chain and an A chain linked by two disulfide bonds.

The protein localises to the secreted. Functionally, insulin decreases blood glucose concentration. It increases cell permeability to monosaccharides, amino acids and fatty acids. It accelerates glycolysis, the pentose phosphate cycle, and glycogen synthesis in liver. In Xenopus laevis (African clawed frog), this protein is Insulin-2 (ins-b).